We begin with the raw amino-acid sequence, 633 residues long: DNA repair protein XRCC1 (633 aa).

S140 bears the Phosphoserine mark. A Glycyl lysine isopeptide (Lys-Gly) (interchain with G-Cter in SUMO1); alternate cross-link involves residue K176. K176 is covalently cross-linked (Glycyl lysine isopeptide (Lys-Gly) (interchain with G-Cter in SUMO2); alternate). Phosphothreonine is present on T198. Phosphoserine is present on S199. At T202 the chain carries Phosphothreonine. 3 positions are modified to phosphoserine: S204, S226, and S241. Residues 221-231 (AASSASPVSRA) show a composition bias toward low complexity. Residues 221-313 (AASSASPVSR…TEPRRPRAGP (93 aa)) are disordered. Residues 240–257 (ESPKGKRKLDLNQEEKKT) show a composition bias toward basic and acidic residues. Phosphothreonine is present on T257. Phosphoserine is present on residues S259 and S266. The span at 277–291 (APTRTPATAPVPARA) shows a compositional bias: low complexity. T281 carries the phosphothreonine modification. Residues 299-313 (PRGEGTEPRRPRAGP) show a composition bias toward basic and acidic residues. The 89-residue stretch at 315 to 403 (ELGKILQGVV…RRLPSQRYLM (89 aa)) folds into the BRCT 1 domain. S371 bears the Phosphoserine; by PRKDC mark. 3 disordered regions span residues 400-462 (RYLM…AASP), 471-490 (EGVQSEGQDNGAEDSGDTED), and 498-536 (QKEHRLPPGQEENGEDPYAGSTDENTDSEEHQEPPDLPV). Phosphoserine is present on residues S408, S409, S410, and S421. The segment covering 427 to 443 (KLPQKQPQTKTKPTQAA) has biased composition (low complexity). Residues S446 and S447 each carry the phosphoserine modification. Residues T453 and T457 each carry the phosphothreonine modification. Residues S461 and S485 each carry the phosphoserine modification. A compositionally biased stretch (acidic residues) spans 481–490 (GAEDSGDTED). Position 488 is a phosphothreonine (T488). S518 carries the post-translational modification Phosphoserine. Phosphothreonine occurs at positions 519 and 523. A BRCT 2 domain is found at 538-629 (ELPDFFQGKH…KLLPHQLYGV (92 aa)).

In terms of assembly, homodimer. Interacts with polynucleotide kinase (PNK), DNA polymerase-beta (POLB) and DNA ligase III (LIG3). Interacts with APTX and APLF. Interacts with APEX1; the interaction is induced by SIRT1 and increases with the acetylated form of APEX1. Interacts with (poly-ADP-ribosylated) PARP1. Post-translationally, phosphorylation of Ser-371 causes dimer dissociation. Phosphorylation by CK2 promotes interaction with APTX and APLF. In terms of processing, sumoylated. Expressed in fibroblasts, retinal pigmented epithelial cells and lymphoblastoid cells (at protein level).

It localises to the nucleus. The protein resides in the chromosome. Scaffold protein involved in DNA single-strand break repair by mediating the assembly of DNA break repair protein complexes. Negatively regulates ADP-ribosyltransferase activity of PARP1 during base-excision repair in order to prevent excessive PARP1 activity. Recognizes and binds poly-ADP-ribose chains: specifically binds auto-poly-ADP-ribosylated PARP1, limiting its activity. The sequence is that of DNA repair protein XRCC1 from Homo sapiens (Human).